The primary structure comprises 80 residues: Conotoxin Bt6.5 (80 aa).

An N-terminal signal peptide occupies residues 1-22; the sequence is MKLTCVLIIAVLFLTACQLATA. A propeptide spanning residues 23 to 45 is cleaved from the precursor; that stretch reads KTYSTGRQKHRALRSTDKNIKLS. 3 cysteine pairs are disulfide-bonded: cysteine 48–cysteine 62, cysteine 55–cysteine 66, and cysteine 61–cysteine 73.

Belongs to the conotoxin O1 superfamily. As to expression, expressed by the venom duct.

The protein resides in the secreted. Functionally, when injected intracranially in mice, induces a series of symptoms such as quivering, climbing, scratching, barrel rolling and paralysis of limbs. Unexpectedly, no effect is observed on ionic currents when tested on locust DUM neuron. This is Conotoxin Bt6.5 from Conus betulinus (Beech cone).